The chain runs to 914 residues: Isoleucine--tRNA ligase (914 aa).

Residues Pro64–His74 carry the 'HIGH' region motif. Glu557 contacts L-isoleucyl-5'-AMP. The 'KMSKS' region signature appears at Pro598 to Ser602. Residue Lys601 coordinates ATP. 4 residues coordinate Zn(2+): Cys889, Cys892, Cys906, and Cys909.

It belongs to the class-I aminoacyl-tRNA synthetase family. IleS type 1 subfamily. As to quaternary structure, monomer. It depends on Zn(2+) as a cofactor.

The protein localises to the cytoplasm. The catalysed reaction is tRNA(Ile) + L-isoleucine + ATP = L-isoleucyl-tRNA(Ile) + AMP + diphosphate. Catalyzes the attachment of isoleucine to tRNA(Ile). As IleRS can inadvertently accommodate and process structurally similar amino acids such as valine, to avoid such errors it has two additional distinct tRNA(Ile)-dependent editing activities. One activity is designated as 'pretransfer' editing and involves the hydrolysis of activated Val-AMP. The other activity is designated 'posttransfer' editing and involves deacylation of mischarged Val-tRNA(Ile). The polypeptide is Isoleucine--tRNA ligase (Leptospira interrogans serogroup Icterohaemorrhagiae serovar Lai (strain 56601)).